The following is a 592-amino-acid chain: Bifunctional purine biosynthesis protein ATIC (592 aa).

Methionine 1 is modified (N-acetylmethionine). Residues 1–146 (MAPGHLALFS…KNHARVTVVC (146 aa)) enclose the MGS-like domain. Residues 1–198 (MAPGHLALFS…ISDYFRKQYS (198 aa)) are IMP cyclohydrolase. IMP-binding positions include 12–14 (SDK), 34–37 (SGGT), 64–67 (RVKT), 101–102 (CN), and 125–126 (DI). Lysine 137 serves as the catalytic Proton donor/acceptor; for FAICAR cyclization activity. At lysine 199 the chain carries N6-acetyllysine. Residues 199–592 (KGISQMPLRY…AHTNLRLFHH (394 aa)) form an AICAR formyltransferase region. 5-amino-1-(5-phospho-beta-D-ribosyl)imidazole-4-carboxamide contacts are provided by residues 207–208 (RY), histidine 267, glycine 316, aspartate 339, asparagine 431, and arginine 451. Histidine 267 acts as the Proton acceptor; for AICAR formyltransferase activity in catalysis. Isoleucine 452 is a binding site for (6R)-10-formyltetrahydrofolate. Phenylalanine 541 contacts 5-amino-1-(5-phospho-beta-D-ribosyl)imidazole-4-carboxamide. (6R)-10-formyltetrahydrofolate is bound by residues aspartate 546 and 565-566 (SA). Arginine 588 lines the 5-amino-1-(5-phospho-beta-D-ribosyl)imidazole-4-carboxamide pocket.

The protein belongs to the PurH family. As to quaternary structure, homodimer. Associates with internalized INSR complexes on Golgi/endosomal membranes. Interacts with INSR; ATIC together with PRKAA2/AMPK2 and HACD3/PTPLAD1 is proposed to be part of a signaling network regulating INSR autophosphorylation and endocytosis.

It localises to the cytoplasm. Its subcellular location is the cytosol. It catalyses the reaction (6R)-10-formyltetrahydrofolate + 5-amino-1-(5-phospho-beta-D-ribosyl)imidazole-4-carboxamide = 5-formamido-1-(5-phospho-D-ribosyl)imidazole-4-carboxamide + (6S)-5,6,7,8-tetrahydrofolate. The catalysed reaction is 10-formyldihydrofolate + 5-amino-1-(5-phospho-beta-D-ribosyl)imidazole-4-carboxamide = 5-formamido-1-(5-phospho-D-ribosyl)imidazole-4-carboxamide + 7,8-dihydrofolate. The enzyme catalyses IMP + H2O = 5-formamido-1-(5-phospho-D-ribosyl)imidazole-4-carboxamide. It participates in purine metabolism; IMP biosynthesis via de novo pathway; 5-formamido-1-(5-phospho-D-ribosyl)imidazole-4-carboxamide from 5-amino-1-(5-phospho-D-ribosyl)imidazole-4-carboxamide (10-formyl THF route): step 1/1. The protein operates within purine metabolism; IMP biosynthesis via de novo pathway; IMP from 5-formamido-1-(5-phospho-D-ribosyl)imidazole-4-carboxamide: step 1/1. With respect to regulation, AMP and XMP inhibit AICAR formyltransferase activity. Bifunctional enzyme that catalyzes the last two steps of purine biosynthesis. Acts as a transformylase that incorporates a formyl group to the AMP analog AICAR (5-amino-1-(5-phospho-beta-D-ribosyl)imidazole-4-carboxamide) to produce the intermediate formyl-AICAR (FAICAR). Can use both 10-formyldihydrofolate and 10-formyltetrahydrofolate as the formyl donor in this reaction. Also catalyzes the cyclization of FAICAR to inosine monophosphate (IMP). Promotes insulin receptor/INSR autophosphorylation and is involved in INSR internalization. This chain is Bifunctional purine biosynthesis protein ATIC (ATIC), found in Pongo abelii (Sumatran orangutan).